The chain runs to 316 residues: MALYELFSHPVERSYRAGLCSKAALFLLLAAALTYIPPLLVAFRSHGFWLKRSSYEEQPTVRFQHQVLLVALLGPESDGFLAWSTFPAFNRLQGDRLRVPLVSTREEDRNQDGKTDMLHFKLELPLQSTEHVLGVQLILTFSYRLHRMATLVMQSMAFLQSSFPVPGSQLYVNGDLRLQQKQPLSCGGLDARYNISVINGTSPFAYDYDLTHIVAAYQERNVTTVLNDPNPIWLVGRAADAPFVINAIIRYPVEVISYQPGFWEMVKFAWVQYVSILLIFLWVFERIKIFVFQNQVVTTIPVTVTPRGDLCKEHLS.

Residues 23–43 (AALFLLLAAALTYIPPLLVAF) traverse the membrane as a helical segment. N-linked (GlcNAc...) asparagine glycosylation is found at Asn-194, Asn-199, and Asn-221. The chain crosses the membrane as a helical span at residues 262-282 (FWEMVKFAWVQYVSILLIFLW).

This sequence belongs to the TMEM231 family. Part of the tectonic-like complex (also named B9 complex). Interacts with TMEM107.

It localises to the cell projection. The protein resides in the cilium membrane. Transmembrane component of the tectonic-like complex, a complex localized at the transition zone of primary cilia and acting as a barrier that prevents diffusion of transmembrane proteins between the cilia and plasma membranes. Required for ciliogenesis and sonic hedgehog/SHH signaling. The sequence is that of Transmembrane protein 231 (TMEM231) from Homo sapiens (Human).